We begin with the raw amino-acid sequence, 119 residues long: Small ribosomal subunit protein uS10 (119 aa).

N-acetylalanine is present on Ala2. A Glycyl lysine isopeptide (Lys-Gly) (interchain with G-Cter in ubiquitin) cross-link involves residue Lys4. Lys8 is modified (N6-succinyllysine; alternate). Lys8 participates in a covalent cross-link: Glycyl lysine isopeptide (Lys-Gly) (interchain with G-Cter in ubiquitin); alternate. Phosphothreonine is present on Thr9. Lys34 and Lys75 each carry N6-acetyllysine. Position 93 is a phosphoserine (Ser93).

The protein belongs to the universal ribosomal protein uS10 family. In terms of assembly, component of the 40S small ribosomal subunit. Post-translationally, polyubiquitinated by ZNF598 via 'Lys-63'-linked ubiquitin chains when a ribosome has stalled, initiating the ribosome quality control (RQC) pathway to degrade the potentially detrimental aberrant nascent polypeptide. Deubiquitinated by OTUD3 and USP21, antagonizing ZNF598 activity. In terms of processing, ufmylated by UFL1.

Its subcellular location is the cytoplasm. Functionally, component of the small ribosomal subunit. The ribosome is a large ribonucleoprotein complex responsible for the synthesis of proteins in the cell. In Sus scrofa (Pig), this protein is Small ribosomal subunit protein uS10 (RPS20).